Reading from the N-terminus, the 146-residue chain is Large ribosomal subunit protein uL13 (146 aa).

The protein belongs to the universal ribosomal protein uL13 family. Part of the 50S ribosomal subunit.

This protein is one of the early assembly proteins of the 50S ribosomal subunit, although it is not seen to bind rRNA by itself. It is important during the early stages of 50S assembly. The polypeptide is Large ribosomal subunit protein uL13 (Mycoplasma pneumoniae (strain ATCC 29342 / M129 / Subtype 1) (Mycoplasmoides pneumoniae)).